The sequence spans 312 residues: Methionyl-tRNA formyltransferase (312 aa).

109–112 (SLLP) contacts (6S)-5,6,7,8-tetrahydrofolate.

The protein belongs to the Fmt family.

It carries out the reaction L-methionyl-tRNA(fMet) + (6R)-10-formyltetrahydrofolate = N-formyl-L-methionyl-tRNA(fMet) + (6S)-5,6,7,8-tetrahydrofolate + H(+). Attaches a formyl group to the free amino group of methionyl-tRNA(fMet). The formyl group appears to play a dual role in the initiator identity of N-formylmethionyl-tRNA by promoting its recognition by IF2 and preventing the misappropriation of this tRNA by the elongation apparatus. The polypeptide is Methionyl-tRNA formyltransferase (Listeria monocytogenes serotype 4a (strain HCC23)).